We begin with the raw amino-acid sequence, 757 residues long: MDVNPTLLFLKVPAQNAISTTFPYTGDPPYSHGTGTGYTMDTVNRTHQYSERGRWTKNTETGAPQLNPIDGPLPKDNEPSGYAQTDCVLEAMAFLEESHPGIFENSCIETMEVVQQTRVDKLTQGRQTYDWTLNRNQPAATALANTIEVFRSNDLIANESGRLIDFLKDVMESMDREEVEITTHFQRKRRVRDNVTKKMVTQRTIGKKKHKLDKRSYLIRALTLNTMTKDAERGKLKRRAIATPGMQIRGFVYFVETLARSICEKLEQSGLPVGGNEKKAKLANVVRKMMTNSQDTEISFTITGDNTKWNENQNPRMFLAMITYITRNQPEWFRNILSIAPIMFSNKMARLGKGYMFESKSMKLRTQIPAEMLANIDLKYFNDSTKKKIEKIRPLLIDGTASLSPGMMMGMFNMLSTVLGVSILNLGQKRYTKTTYWWDGLQSSDDFALIVNAPNYAGIQAGVDRFYRTCKLLGINMSKKKSYINRTGTFEFTSFFYRYGFVANFSMELPSFGVSGVNESADMSIGVTVIKNNMINNDLGPATAQMALQLFIKDYRYTYRCHRGDTQIQTRRSFEIKKLWDQTRSKAGLLVSDGGPNLYNIRNLHIPEVCLKWELMDEDYQGRLCNPLNPFVSHKEIESVNNAVMMPAHGPAKNMEYDAVATTHSWVPKRNRSILNTSQRGILEDEQMYQRCCNLFEKFFPSSSYRRPVGISSMVEAMVSRARIDARIDFESGRIKKEEFSEIMKTCSTIEDLRRQK.

Positions 53–82 (GRWTKNTETGAPQLNPIDGPLPKDNEPSGY) are disordered. 2 short sequence motifs (nuclear localization signal) span residues 187 to 195 (RKRRVRDNV) and 203 to 216 (RTIGKKKHKLDKRS). The promoter-binding site stretch occupies residues 249–256 (RGFVYFVE). The 198-residue stretch at 286–483 (VRKMMTNSQD…GINMSKKKSY (198 aa)) folds into the RdRp catalytic domain.

Belongs to the influenza viruses polymerase PB1 family. In terms of assembly, influenza RNA polymerase is composed of three subunits: PB1, PB2 and PA. Interacts (via N-terminus) with PA (via C-terminus). Interacts (via C-terminus) with PB2 (via N-terminus); this interaction is essential for transcription initiation. Interacts (via C-terminus) with human PKP2 (via N-terminus); the interaction competitively inhibits the interaction between the RNA polymerase subunits PB1 and PB2. In terms of processing, phosphorylated by host PRKCA.

The protein resides in the host nucleus. It localises to the host cytoplasm. The enzyme catalyses RNA(n) + a ribonucleoside 5'-triphosphate = RNA(n+1) + diphosphate. In terms of biological role, RNA-dependent RNA polymerase which is responsible for replication and transcription of virus RNA segments. The transcription of viral mRNAs occurs by a unique mechanism called cap-snatching. 5' methylated caps of cellular mRNAs are cleaved after 10-13 nucleotides by PA. In turn, these short capped RNAs are used as primers by PB1 for transcription of viral mRNAs. During virus replication, PB1 initiates RNA synthesis and copy vRNA into complementary RNA (cRNA) which in turn serves as a template for the production of more vRNAs. In Influenza A virus (strain A/USA:Memphis/10/1996 H1N1), this protein is RNA-directed RNA polymerase catalytic subunit.